We begin with the raw amino-acid sequence, 503 residues long: Secreted RxLR effector protein RXLR-C08 (503 aa).

An N-terminal signal peptide occupies residues 1 to 22 (MRLCGVASAFLSTLILIAHIDA). N-linked (GlcNAc...) asparagine glycosylation is found at Asn27, Asn35, and Asn45. Residues 57-60 (DEER) carry the dEER motif. N-linked (GlcNAc...) asparagine glycans are attached at residues Asn108, Asn197, and Asn374.

This sequence belongs to the RxLR effector family.

The protein localises to the secreted. It is found in the host Golgi apparatus. Secreted effector that suppresses pattern-triggered immunity (PTI) in plant host. This Plasmopara halstedii (Downy mildew of sunflower) protein is Secreted RxLR effector protein RXLR-C08.